The following is a 473-amino-acid chain: Glutamate--tRNA ligase (473 aa).

The short motif at 13–23 (PSPTGFLHVGG) is the 'HIGH' region element. The 'KMSKS' region motif lies at 240–244 (KLSKR). Lysine 243 is an ATP binding site.

This sequence belongs to the class-I aminoacyl-tRNA synthetase family. Glutamate--tRNA ligase type 1 subfamily. In terms of assembly, monomer.

Its subcellular location is the cytoplasm. The enzyme catalyses tRNA(Glu) + L-glutamate + ATP = L-glutamyl-tRNA(Glu) + AMP + diphosphate. Catalyzes the attachment of glutamate to tRNA(Glu) in a two-step reaction: glutamate is first activated by ATP to form Glu-AMP and then transferred to the acceptor end of tRNA(Glu). This Shewanella denitrificans (strain OS217 / ATCC BAA-1090 / DSM 15013) protein is Glutamate--tRNA ligase.